A 128-amino-acid polypeptide reads, in one-letter code: uncharacterized protein (128 aa).

The helical transmembrane segment at Tyr-8–Tyr-28 threads the bilayer.

It is found in the membrane. This is an uncharacterized protein from Haemophilus influenzae (strain ATCC 51907 / DSM 11121 / KW20 / Rd).